Consider the following 207-residue polypeptide: Holliday junction branch migration complex subunit RuvA (207 aa).

Positions 1–64 (MIGRLRGNLL…EDAQLLYGFN (64 aa)) are domain I. Residues 65–143 (TKNERALFRE…GWGAGDLFTP (79 aa)) are domain II. The tract at residues 144-158 (ATDAAPMDDGSEFIT) is flexible linker. Residues 159–207 (SPQSAVDEAVSALIALGYKPQQASKTVSQIAKPDMTSEVLIRESLKSMI) form a domain III region.

Belongs to the RuvA family. In terms of assembly, homotetramer. Forms an RuvA(8)-RuvB(12)-Holliday junction (HJ) complex. HJ DNA is sandwiched between 2 RuvA tetramers; dsDNA enters through RuvA and exits via RuvB. An RuvB hexamer assembles on each DNA strand where it exits the tetramer. Each RuvB hexamer is contacted by two RuvA subunits (via domain III) on 2 adjacent RuvB subunits; this complex drives branch migration. In the full resolvosome a probable DNA-RuvA(4)-RuvB(12)-RuvC(2) complex forms which resolves the HJ.

Its subcellular location is the cytoplasm. Functionally, the RuvA-RuvB-RuvC complex processes Holliday junction (HJ) DNA during genetic recombination and DNA repair, while the RuvA-RuvB complex plays an important role in the rescue of blocked DNA replication forks via replication fork reversal (RFR). RuvA specifically binds to HJ cruciform DNA, conferring on it an open structure. The RuvB hexamer acts as an ATP-dependent pump, pulling dsDNA into and through the RuvAB complex. HJ branch migration allows RuvC to scan DNA until it finds its consensus sequence, where it cleaves and resolves the cruciform DNA. The polypeptide is Holliday junction branch migration complex subunit RuvA (Aliivibrio fischeri (strain ATCC 700601 / ES114) (Vibrio fischeri)).